The chain runs to 515 residues: Maturase K (515 aa).

It belongs to the intron maturase 2 family. MatK subfamily.

Its subcellular location is the plastid. It localises to the chloroplast. Usually encoded in the trnK tRNA gene intron. Probably assists in splicing its own and other chloroplast group II introns. This is Maturase K from Pinus attenuata (Knobcone pine).